The sequence spans 800 residues: Chondroitin sulfate synthase 1 (800 aa).

Over 1 to 7 (MAARGRR) the chain is Cytoplasmic. Residues 8–28 (AWLSMLLGLVLGFVLASRLVL) form a helical; Signal-anchor for type II membrane protein membrane-spanning segment. Residues 29-800 (PRASELKRVG…GGSHGSARTA (772 aa)) lie on the Lumenal side of the membrane. The tract at residues 36–66 (RVGPRRRPSPEGCRPGQEASQPGGARGDARG) is disordered. Residues asparagine 188 and asparagine 622 are each glycosylated (N-linked (GlcNAc...) asparagine). Residues aspartate 632 and histidine 746 each contribute to the a divalent metal cation site.

Belongs to the chondroitin N-acetylgalactosaminyltransferase family. It depends on Co(2+) as a cofactor. The cofactor is Mn(2+). Cd(2+) is required as a cofactor.

It localises to the golgi apparatus. Its subcellular location is the golgi stack membrane. It is found in the secreted. It catalyses the reaction 3-O-(beta-D-GlcA-(1-&gt;3)-beta-D-GalNAc-(1-&gt;4)-beta-D-GlcA-(1-&gt;3)-beta-D-Gal-(1-&gt;3)-beta-D-Gal-(1-&gt;4)-beta-D-Xyl)-L-seryl-[protein] + UDP-N-acetyl-alpha-D-galactosamine = 3-O-(beta-D-GalNAc-(1-&gt;4)-beta-D-GlcA-(1-&gt;3)-beta-D-GalNAc-(1-&gt;4)-beta-D-GlcA-(1-&gt;3)-beta-D-Gal-(1-&gt;3)-beta-D-Gal-(1-&gt;4)-beta-D-Xyl)-L-seryl-[protein] + UDP + H(+). It carries out the reaction 3-O-{beta-D-GlcA-(1-&gt;3)-[beta-D-GalNAc-(1-&gt;4)-beta-D-GlcA-(1-&gt;3)](n)-beta-D-GalNAc-(1-&gt;4)-beta-D-GlcA-(1-&gt;3)-beta-D-Gal-(1-&gt;3)-beta-D-Gal-(1-&gt;4)-beta-D-Xyl}-L-seryl-[protein] + UDP-N-acetyl-alpha-D-galactosamine = 3-O-{[beta-D-GalNAc-(1-&gt;4)-beta-D-GlcA-(1-&gt;3)](n+1)-beta-D-GalNAc-(1-&gt;4)-beta-D-GlcA-(1-&gt;3)-beta-D-Gal-(1-&gt;3)-beta-D-Gal-(1-&gt;4)-beta-D-Xyl}-L-seryl-[protein] + UDP + H(+). The enzyme catalyses 3-O-(beta-D-GalNAc-(1-&gt;4)-beta-D-GlcA-(1-&gt;3)-beta-D-Gal-(1-&gt;3)-beta-D-Gal-(1-&gt;4)-beta-D-Xyl)-L-seryl-[protein] + UDP-alpha-D-glucuronate = 3-O-(beta-D-GlcA-(1-&gt;3)-beta-D-GalNAc-(1-&gt;4)-beta-D-GlcA-(1-&gt;3)-beta-D-Gal-(1-&gt;3)-beta-D-Gal-(1-&gt;4)-beta-D-Xyl)-L-seryl-[protein] + UDP + H(+). The catalysed reaction is 3-O-{[beta-D-GalNAc-(1-&gt;4)-beta-D-GlcA-(1-&gt;3)](n)-beta-D-GalNAc-(1-&gt;4)-beta-D-GlcA-(1-&gt;3)-beta-D-Gal-(1-&gt;3)-beta-D-Gal-(1-&gt;4)-beta-D-Xyl}-L-seryl-[protein] + UDP-alpha-D-glucuronate = 3-O-{beta-D-GlcA-(1-&gt;3)-[beta-D-GalNAc-(1-&gt;4)-beta-D-GlcA-(1-&gt;3)](n)-beta-D-GalNAc-(1-&gt;4)-beta-D-GlcA-(1-&gt;3)-beta-D-Gal-(1-&gt;3)-beta-D-Gal-(1-&gt;4)-beta-D-Xyl}-L-seryl-[protein] + UDP + H(+). Has both beta-1,3-glucuronic acid and beta-1,4-N-acetylgalactosamine transferase activity. Transfers glucuronic acid (GlcUA) from UDP-GlcUA and N-acetylgalactosamine (GalNAc) from UDP-GalNAc to the non-reducing end of the elongating chondroitin polymer. Involved in the negative control of osteogenesis likely through the modulation of NOTCH signaling. The protein is Chondroitin sulfate synthase 1 (Chsy1) of Mus musculus (Mouse).